Reading from the N-terminus, the 215-residue chain is Pyrrolidone-carboxylate peptidase (215 aa).

Residues E80, C143, and H167 contribute to the active site.

Belongs to the peptidase C15 family. In terms of assembly, homotetramer.

The protein localises to the cytoplasm. It carries out the reaction Release of an N-terminal pyroglutamyl group from a polypeptide, the second amino acid generally not being Pro.. Its function is as follows. Removes 5-oxoproline from various penultimate amino acid residues except L-proline. The polypeptide is Pyrrolidone-carboxylate peptidase (Bacillus thuringiensis (strain Al Hakam)).